A 437-amino-acid chain; its full sequence is MANVVVIGAQWGDEGKGKITDLLSRSADVVVRYQGGVNAGHTIVVDDQVLKLHLIPSGILYPETICLIGSGTVIDPKVMLKELDMLLENSIDISGLQLASTAHVTMPYHRLLDEAMEQQRGDQRIGTTGRGIGPTYADKSQRNGIRVLDLLDSQRLRERLRGPLQEKNRLLEQIYGVAPLDSEQVIEEYLGYGQRLAPHVVDCIQTIHQAARSRKNILFEGAQGTLLDLDHGTYPYVTSSNPISGGACIGAGVGPTLIDRVIGVAKAYTTRVGEGPFPTELEGSINEQLCDRGGEFGTTTGRRRRCGWFDGVIGRYAVAVNGLDCLAITKLDVLDELDEIRVCVAYELNGERIEHFPSSAEDFARCHPIFETLPGWQCSTADCRRLEDLPTTAMDYLRFLADLMEVPIAIVSLGANRDQTIVVEDPIHGPKRALLSA.

GTP contacts are provided by residues 12-18 and 40-42; these read GDEGKGK and GHT. Asp-13 acts as the Proton acceptor in catalysis. Mg(2+) is bound by residues Asp-13 and Gly-40. IMP contacts are provided by residues 13-16, 38-41, Thr-128, Arg-142, Gln-223, Thr-238, and Arg-302; these read DEGK and NAGH. The Proton donor role is filled by His-41. 298 to 304 contacts substrate; sequence TTTGRRR. GTP is bound by residues Arg-304, 330-332, and 412-414; these read KLD and SLG.

The protein belongs to the adenylosuccinate synthetase family. Homodimer. It depends on Mg(2+) as a cofactor.

It is found in the cytoplasm. It catalyses the reaction IMP + L-aspartate + GTP = N(6)-(1,2-dicarboxyethyl)-AMP + GDP + phosphate + 2 H(+). It functions in the pathway purine metabolism; AMP biosynthesis via de novo pathway; AMP from IMP: step 1/2. Its function is as follows. Plays an important role in the de novo pathway of purine nucleotide biosynthesis. Catalyzes the first committed step in the biosynthesis of AMP from IMP. The polypeptide is Adenylosuccinate synthetase (Prochlorococcus marinus (strain MIT 9313)).